Reading from the N-terminus, the 440-residue chain is Glutamyl-tRNA reductase (440 aa).

Substrate-binding positions include 50 to 53 (TCNR), serine 109, 114 to 116 (EPQ), and glutamine 120. The Nucleophile role is filled by cysteine 51. Residue 189 to 194 (GAGEMA) participates in NADP(+) binding.

It belongs to the glutamyl-tRNA reductase family. In terms of assembly, homodimer.

It carries out the reaction (S)-4-amino-5-oxopentanoate + tRNA(Glu) + NADP(+) = L-glutamyl-tRNA(Glu) + NADPH + H(+). Its pathway is porphyrin-containing compound metabolism; protoporphyrin-IX biosynthesis; 5-aminolevulinate from L-glutamyl-tRNA(Glu): step 1/2. Functionally, catalyzes the NADPH-dependent reduction of glutamyl-tRNA(Glu) to glutamate 1-semialdehyde (GSA). In Nitratidesulfovibrio vulgaris (strain ATCC 29579 / DSM 644 / CCUG 34227 / NCIMB 8303 / VKM B-1760 / Hildenborough) (Desulfovibrio vulgaris), this protein is Glutamyl-tRNA reductase.